Here is a 1100-residue protein sequence, read N- to C-terminus: cGMP-inhibited 3',5'-cyclic phosphodiesterase 3B (1100 aa).

Basic and acidic residues predominate over residues 1–11; sequence MRKDERERDAP. The interval 1–28 is interaction with RAPGEF3; sequence MRKDERERDAPAMRSPPPPPASAASPPE. A disordered region spans residues 1-29; that stretch reads MRKDERERDAPAMRSPPPPPASAASPPES. Serine 15 is subject to Phosphoserine. Transmembrane regions (helical) follow at residues 69 to 89, 110 to 130, 140 to 160, 170 to 190, 198 to 218, and 225 to 245; these read AGAR…LLGA, LSLS…CFLT, AGSW…FAAW, PAAA…TLAP, VLVL…LGAL, and LLSC…DHFF. Phosphoserine; by PKB/AKT1 or PKB/AKT2 is present on serine 273. Phosphoserine is present on residues serine 274 and serine 421. 2 disordered regions span residues 400-423 and 570-590; these read RKLH…SSGA and EPDG…SVFS. A compositionally biased stretch (polar residues) spans 408 to 423; the sequence is GRTSFPTPQLRRSSGA. The tract at residues 415–439 is interaction with PIK3R6; that stretch reads PQLRRSSGASSLLTNEHCSRWDRSS. The span at 573–583 shows a compositional bias: basic and acidic residues; it reads GTDHPSEKSGE. The PDEase domain occupies 627 to 1061; the sequence is PNIDQEVSLD…KIWKEIIEEE (435 aa). The Proton donor role is filled by histidine 713. Residue histidine 713 participates in AMP binding. Histidine 717, histidine 797, aspartate 798, and aspartate 913 together coordinate Mg(2+). AMP-binding residues include aspartate 798, aspartate 913, and glutamine 964. The span at 993–1024 shows a compositional bias: acidic residues; that stretch reads EEGDDTESDDDDDDDDGDGGEELDSDDEETED. A disordered region spans residues 993–1033; sequence EEGDDTESDDDDDDDDGDGGEELDSDDEETEDNLNPKPQRR. A coiled-coil region spans residues 1044–1079; that stretch reads MHHLTENHKIWKEIIEEEEEKCKAEGNKLQVDNASL.

This sequence belongs to the cyclic nucleotide phosphodiesterase family. PDE3 subfamily. Homodimer. Interacts with PIK3CG; regulates PDE3B activity and thereby cAMP levels in cells. Interacts with RAPGEF3 and PIK3R6; form a signaling complex that regulates phosphatidylinositol 3-kinase gamma in angiogenesis. Interacts with ABHD15; this interaction regulates PDE3B's stability and expression and, thereby, impacts the antilipolytic action of insulin. It depends on Mg(2+) as a cofactor. Mn(2+) is required as a cofactor. In terms of processing, phosphorylation at Ser-273 mediates insulin-induced activation of PDE3B. As to expression, abundant in adipose tissues.

The protein resides in the membrane. The enzyme catalyses a nucleoside 3',5'-cyclic phosphate + H2O = a nucleoside 5'-phosphate + H(+). The catalysed reaction is 3',5'-cyclic AMP + H2O = AMP + H(+). It carries out the reaction 3',5'-cyclic GMP + H2O = GMP + H(+). Its activity is regulated as follows. Inhibited by cGMP. Functionally, cyclic nucleotide phosphodiesterase with a dual-specificity for the second messengers cAMP and cGMP, which are key regulators of many important physiological processes. Regulates angiogenesis by inhibiting the cAMP-dependent guanine nucleotide exchange factor RAPGEF3 and downstream phosphatidylinositol 3-kinase gamma-mediated signaling. Controls cardiac contractility by reducing cAMP concentration in cardiocytes. The polypeptide is cGMP-inhibited 3',5'-cyclic phosphodiesterase 3B (Mus musculus (Mouse)).